Consider the following 253-residue polypeptide: uncharacterized protein (253 aa).

Substrate is bound at residue Ser-145. Tyr-159 serves as the catalytic Proton acceptor.

It belongs to the short-chain dehydrogenases/reductases (SDR) family.

This is an uncharacterized protein from Mycobacterium tuberculosis (strain CDC 1551 / Oshkosh).